The chain runs to 341 residues: RNA 3'-terminal phosphate cyclase (341 aa).

ATP is bound by residues Gln-102 and 283 to 287; that span reads HLADQ. Residue His-308 is the Tele-AMP-histidine intermediate of the active site.

This sequence belongs to the RNA 3'-terminal cyclase family. Type 1 subfamily.

It localises to the cytoplasm. It carries out the reaction a 3'-end 3'-phospho-ribonucleotide-RNA + ATP = a 3'-end 2',3'-cyclophospho-ribonucleotide-RNA + AMP + diphosphate. In terms of biological role, catalyzes the conversion of 3'-phosphate to a 2',3'-cyclic phosphodiester at the end of RNA. The mechanism of action of the enzyme occurs in 3 steps: (A) adenylation of the enzyme by ATP; (B) transfer of adenylate to an RNA-N3'P to produce RNA-N3'PP5'A; (C) and attack of the adjacent 2'-hydroxyl on the 3'-phosphorus in the diester linkage to produce the cyclic end product. The biological role of this enzyme is unknown but it is likely to function in some aspects of cellular RNA processing. In Ectopseudomonas mendocina (strain ymp) (Pseudomonas mendocina), this protein is RNA 3'-terminal phosphate cyclase.